The sequence spans 404 residues: Glycosylated lysosomal membrane protein (404 aa).

An N-terminal signal peptide occupies residues 1–26 (MSGYEKPSRGWGFCALSPVLLSLLMA). Residues 27–370 (APLGLLGEET…VDALSPLVLG (344 aa)) lie on the Lumenal side of the membrane. N-linked (GlcNAc...) asparagine glycosylation is found at asparagine 63, asparagine 132, asparagine 157, asparagine 185, and asparagine 228. A helical transmembrane segment spans residues 371–391 (IMAVALGAPALMLLAGGLFLL). The Cytoplasmic segment spans residues 392–404 (LGRKRDSEYQSIN). The Lysosomal targeting motif signature appears at 400 to 404 (YQSIN).

The protein belongs to the GLMP family. In terms of assembly, interacts (via lumenal domain) with lysosomal protein MFSD1; the interaction starts while both proteins are still in the endoplasmic reticulum and is required for stabilization of MFSD1 in lysosomes but has no direct effect on its targeting to lysosomes or transporter activity. Highly N-glycosylated. N-glycosylation is essential for GLMP stability and for MFSD1 lysosomal localization.

The protein resides in the lysosome membrane. Its function is as follows. Required to protect lysosomal transporter MFSD1 from lysosomal proteolysis and for MFSD1 lysosomal localization. This is Glycosylated lysosomal membrane protein from Bos taurus (Bovine).